The sequence spans 205 residues: MTKLSKRQLDILRFIKAEVKSKGYPPSVREIGEAVGLASSSTVHGHLARLETKGLIRRDPTKPRAIEILDEEVDIPQSQVVNVPVIGKVTAGSPITAVENIEEYFPLPDRMVPPDEHVFMLEIMGDSMIDAGILDKDYVIVKQQNTANNGEIVVAMTEDDEATVKRFYKEDTHIRLQPENPTMEPIILQNVSILGKVIGVFRTVH.

The segment at residues 28–48 (VREIGEAVGLASSSTVHGHLA) is a DNA-binding region (H-T-H motif). Active-site for autocatalytic cleavage activity residues include serine 127 and lysine 165.

Belongs to the peptidase S24 family. Homodimer. Following treatment with mitomycin C protein levels begin to decrease after a 5-min lag and do not return to their original levels for at least 90 minutes.

The catalysed reaction is Hydrolysis of Ala-|-Gly bond in repressor LexA.. Represses dinA, dinB, dinC, recA genes and itself by binding to the 14 bp palindromic sequence 5'-CGAACNNNNGTTCG-3'; some genes have a tandem consensus sequence and their binding is cooperative. In the presence of single-stranded DNA, RecA interacts with LexA causing an autocatalytic cleavage which disrupts the DNA-binding part of LexA, leading to derepression of the SOS regulon and eventually DNA repair; autocleavage is maximal at pH 11 in the absence of RecA and ssDNA. In Bacillus subtilis (strain 168), this protein is LexA repressor.